Here is a 238-residue protein sequence, read N- to C-terminus: Small ribosomal subunit protein uS2 (238 aa).

The protein belongs to the universal ribosomal protein uS2 family.

This Synechococcus sp. (strain CC9311) protein is Small ribosomal subunit protein uS2.